The chain runs to 520 residues: BTB/POZ domain-containing protein At3g50780 (520 aa).

The disordered stretch occupies residues 43–68 (SHNSLTKHKQSSPALQPPKPEKKPSS). A BTB domain is found at 127–196 (AKVILVGKQG…MYCKDMKQRL (70 aa)).

It functions in the pathway protein modification; protein ubiquitination. Its function is as follows. May act as a substrate-specific adapter of an E3 ubiquitin-protein ligase complex (CUL3-RBX1-BTB) which mediates the ubiquitination and subsequent proteasomal degradation of target proteins. In Arabidopsis thaliana (Mouse-ear cress), this protein is BTB/POZ domain-containing protein At3g50780.